The following is a 110-amino-acid chain: Small ribosomal subunit protein bS16 (110 aa).

The disordered stretch occupies residues 79–110 (AAGVKKREARNNPQKAVPRKERKAQAEAAAKG).

This sequence belongs to the bacterial ribosomal protein bS16 family.

The protein is Small ribosomal subunit protein bS16 of Bradyrhizobium diazoefficiens (strain JCM 10833 / BCRC 13528 / IAM 13628 / NBRC 14792 / USDA 110).